Consider the following 405-residue polypeptide: Glutamate-pyruvate aminotransferase AlaA (405 aa).

L-alanine contacts are provided by glycine 41 and asparagine 179. Lysine 240 carries the post-translational modification N6-(pyridoxal phosphate)lysine. Arginine 378 provides a ligand contact to L-alanine.

The protein belongs to the class-I pyridoxal-phosphate-dependent aminotransferase family. As to quaternary structure, homodimer. Requires pyridoxal 5'-phosphate as cofactor.

The protein localises to the cytoplasm. It catalyses the reaction L-alanine + 2-oxoglutarate = pyruvate + L-glutamate. The protein operates within amino-acid biosynthesis; L-alanine biosynthesis. In terms of biological role, involved in the biosynthesis of alanine. Catalyzes the transamination of pyruvate by glutamate, leading to the formation of L-alanine and 2-oxoglutarate. Is also able to catalyze the reverse reaction. The protein is Glutamate-pyruvate aminotransferase AlaA of Escherichia coli (strain K12).